Consider the following 270-residue polypeptide: Putative carboxymethylenebutenolidase (270 aa).

Residues C147, D204, and H236 contribute to the active site.

This sequence belongs to the dienelactone hydrolase family.

It catalyses the reaction 2-(5-oxo-2,5-dihydrofuran-2-ylidene)acetate + H2O = 4-oxohex-2-enedioate + H(+). The sequence is that of Putative carboxymethylenebutenolidase (ysgA) from Salmonella typhimurium (strain LT2 / SGSC1412 / ATCC 700720).